An 86-amino-acid chain; its full sequence is Putative regulatory protein Desal_2819 (86 aa).

It belongs to the RemA family.

This is Putative regulatory protein Desal_2819 from Maridesulfovibrio salexigens (strain ATCC 14822 / DSM 2638 / NCIMB 8403 / VKM B-1763) (Desulfovibrio salexigens).